A 39-amino-acid polypeptide reads, in one-letter code: MLALKISVYSVVFFFIGIFMFGFLASDPSRTPSRKDLEE.

The chain crosses the membrane as a helical span at residues 6–26 (ISVYSVVFFFIGIFMFGFLAS).

The protein belongs to the PsbI family. As to quaternary structure, PSII is composed of 1 copy each of membrane proteins PsbA, PsbB, PsbC, PsbD, PsbE, PsbF, PsbH, PsbI, PsbJ, PsbK, PsbL, PsbM, PsbT, PsbX, PsbY, PsbZ, Psb30/Ycf12, peripheral proteins PsbO, CyanoQ (PsbQ), PsbU, PsbV and a large number of cofactors. It forms dimeric complexes.

Its subcellular location is the cellular thylakoid membrane. In terms of biological role, one of the components of the core complex of photosystem II (PSII), required for its stability and/or assembly. PSII is a light-driven water:plastoquinone oxidoreductase that uses light energy to abstract electrons from H(2)O, generating O(2) and a proton gradient subsequently used for ATP formation. It consists of a core antenna complex that captures photons, and an electron transfer chain that converts photonic excitation into a charge separation. The sequence is that of Photosystem II reaction center protein I from Synechococcus sp. (strain RCC307).